Reading from the N-terminus, the 180-residue chain is Segregation and condensation protein B (180 aa).

The protein belongs to the ScpB family. As to quaternary structure, homodimer. Homodimerization may be required to stabilize the binding of ScpA to the Smc head domains. Component of a cohesin-like complex composed of ScpA, ScpB and the Smc homodimer, in which ScpA and ScpB bind to the head domain of Smc. The presence of the three proteins is required for the association of the complex with DNA.

It is found in the cytoplasm. In terms of biological role, participates in chromosomal partition during cell division. May act via the formation of a condensin-like complex containing Smc and ScpA that pull DNA away from mid-cell into both cell halves. The sequence is that of Segregation and condensation protein B from Staphylococcus epidermidis (strain ATCC 35984 / DSM 28319 / BCRC 17069 / CCUG 31568 / BM 3577 / RP62A).